The sequence spans 330 residues: Putative pentatricopeptide repeat-containing protein At5g36300 (330 aa).

PPR repeat units follow at residues 10–44, 45–75, 83–113, 114–148, 149–179, 185–215, 231–265, 266–296, and 302–330; these read SLSM…GSRP, DPLS…VVRF, VRLY…KFRL, NSFV…GLPM, DVEI…LQRS, NIRT…IFED, SANL…GIEP, NLIM…IKET, and DVVT…LVTL.

Belongs to the PPR family. P subfamily.

This chain is Putative pentatricopeptide repeat-containing protein At5g36300, found in Arabidopsis thaliana (Mouse-ear cress).